Reading from the N-terminus, the 318-residue chain is Methionyl-tRNA formyltransferase (318 aa).

Serine 120 to proline 123 lines the (6S)-5,6,7,8-tetrahydrofolate pocket.

It belongs to the Fmt family.

It catalyses the reaction L-methionyl-tRNA(fMet) + (6R)-10-formyltetrahydrofolate = N-formyl-L-methionyl-tRNA(fMet) + (6S)-5,6,7,8-tetrahydrofolate + H(+). In terms of biological role, attaches a formyl group to the free amino group of methionyl-tRNA(fMet). The formyl group appears to play a dual role in the initiator identity of N-formylmethionyl-tRNA by promoting its recognition by IF2 and preventing the misappropriation of this tRNA by the elongation apparatus. The polypeptide is Methionyl-tRNA formyltransferase (Variovorax paradoxus (strain S110)).